Consider the following 149-residue polypeptide: 3-dehydroquinate dehydratase (149 aa).

Tyr-26 acts as the Proton acceptor in catalysis. Substrate contacts are provided by Asn-78, His-84, and Asp-91. His-104 functions as the Proton donor in the catalytic mechanism. Substrate-binding positions include 105–106 and Arg-115; that span reads LS.

It belongs to the type-II 3-dehydroquinase family. As to quaternary structure, homododecamer.

The catalysed reaction is 3-dehydroquinate = 3-dehydroshikimate + H2O. The protein operates within metabolic intermediate biosynthesis; chorismate biosynthesis; chorismate from D-erythrose 4-phosphate and phosphoenolpyruvate: step 3/7. Catalyzes a trans-dehydration via an enolate intermediate. The chain is 3-dehydroquinate dehydratase from Polynucleobacter necessarius subsp. necessarius (strain STIR1).